The primary structure comprises 131 residues: Single-stranded DNA-binding protein 2 (131 aa).

The region spanning 1–103 (MYNKVIMIGR…VLASSFQLLE (103 aa)) is the SSB domain. The short motif at 126–131 (EEELPF) is the Important for interaction with partner proteins element.

As to quaternary structure, homotetramer.

Functionally, plays an important role in DNA replication, recombination and repair. Binds to ssDNA and to an array of partner proteins to recruit them to their sites of action during DNA metabolism. In Streptococcus agalactiae serotype V (strain ATCC BAA-611 / 2603 V/R), this protein is Single-stranded DNA-binding protein 2 (ssb2).